Consider the following 177-residue polypeptide: Large ribosomal subunit protein uL6 (177 aa).

It belongs to the universal ribosomal protein uL6 family. In terms of assembly, part of the 50S ribosomal subunit.

In terms of biological role, this protein binds to the 23S rRNA, and is important in its secondary structure. It is located near the subunit interface in the base of the L7/L12 stalk, and near the tRNA binding site of the peptidyltransferase center. This is Large ribosomal subunit protein uL6 from Marinomonas sp. (strain MWYL1).